The following is a 616-amino-acid chain: Chaperone protein HscA (616 aa).

This sequence belongs to the heat shock protein 70 family.

Its function is as follows. Chaperone involved in the maturation of iron-sulfur cluster-containing proteins. Has a low intrinsic ATPase activity which is markedly stimulated by HscB. Involved in the maturation of IscU. The protein is Chaperone protein HscA of Salmonella newport (strain SL254).